The sequence spans 422 residues: MSIVAVGINHKTAPVAVREKISFNPDKLSIALQEMLNAVQCREVAILSTCNRTELYLVQDGDFDVTQQRLIKWLESFHNVPASTILPSLYWHKDQQAVNHMMRVACGLDSLVLGEPQILGQMKQAYSQAKAAGSMSLIMDRLFQRTFGVAKQVRTETEIGASAVSVAFASVNLAKHIFGGLEKTKVLLVGAGETIELVAKHLYENNVGKITVANRTLARAENMATKIGADVITLAQIPEHMCNADIVISSTGSTLPIIGKGMVEQALASRKHQPIFMVDLAVPRDIEEQVSELEDVFLYTVDDLQGIIAKNIANRRKAAVQAESIVNSQSDNFMAWLRGLNTQDTVISYRKQCLDNRDVLLEKAFIQLKNGKNSEAVLAELANKLTNKFMHAPTSALQSAAQGGELDKLIYLRDIFNIDSQE.

Residues 49–52, S110, 115–117, and Q121 contribute to the substrate site; these read TCNR and EPQ. The Nucleophile role is filled by C50. NADP(+) is bound at residue 190–195; the sequence is GAGETI.

The protein belongs to the glutamyl-tRNA reductase family. As to quaternary structure, homodimer.

It catalyses the reaction (S)-4-amino-5-oxopentanoate + tRNA(Glu) + NADP(+) = L-glutamyl-tRNA(Glu) + NADPH + H(+). The protein operates within porphyrin-containing compound metabolism; protoporphyrin-IX biosynthesis; 5-aminolevulinate from L-glutamyl-tRNA(Glu): step 1/2. Functionally, catalyzes the NADPH-dependent reduction of glutamyl-tRNA(Glu) to glutamate 1-semialdehyde (GSA). This is Glutamyl-tRNA reductase from Colwellia psychrerythraea (strain 34H / ATCC BAA-681) (Vibrio psychroerythus).